The sequence spans 1434 residues: MASAGNAAGALGRQAGGGRRRRTGGPHRAAPDRDYLHRPSYCDAAFALEQISKGKATGRKAPLWLRAKFQRLLFKLGCYIQKNCGKFLVVGLLIFGAFAVGLKAANLETNVEELWVEVGGRVSRELNYTRQKIGEEAMFNPQLMIQTPKEEGANVLTTEALLQHLDSALQASRVHVYMYNRQWKLEHLCYKSGELITETGYMDQIIEYLYPCLIITPLDCFWEGAKLQSGTAYLLGKPPLRWTNFDPLEFLEELKKINYQVDSWEEMLNKAEVGHGYMDRPCLNPADPDCPATAPNKNSTKPLDVALVLNGGCQGLSRKYMHWQEELIVGGTVKNATGKLVSAHALQTMFQLMTPKQMYEHFRGYDYVSHINWNEDRAAAILEAWQRTYVEVVHQSVAPNSTQKVLPFTTTTLDDILKSFSDVSVIRVASGYLLMLAYACLTMLRWDCSKSQGAVGLAGVLLVALSVAAGLGLCSLIGISFNAATTQVLPFLALGVGVDDVFLLAHAFSETGQNKRIPFEDRTGECLKRTGASVALTSISNVTAFFMAALIPIPALRAFSLQAAVVVVFNFAMVLLIFPAILSMDLYRREDRRLDIFCCFTSPCVSRVIQVEPQAYTEPHSNTRYSPPPPYTSHSFAHETHITMQSTVQLRTEYDPHTHVYYTTAEPRSEISVQPVTVTQDNLSCQSPESTSSTRDLLSQFSDSSLHCLEPPCTKWTLSSFAEKHYAPFLLKPKAKVVVILLFLGLLGVSLYGTTRVRDGLDLTDIVPRETREYDFIAAQFKYFSFYNMYIVTQKADYPNIQHLLYDLHKSFSNVKYVMLEENKQLPQMWLHYFRDWLQGLQDAFDSDWETGRIMPNNYKNGSDDGVLAYKLLVQTGSRDKPIDISQLTKQRLVDADGIINPSAFYIYLTAWVSNDPVAYAASQANIRPHRPEWVHDKADYMPETRLRIPAAEPIEYAQFPFYLNGLRDTSDFVEAIEKVRVICNNYTSLGLSSYPNGYPFLFWEQYISLRHWLLLSISVVLACTFLVCAVFLLNPWTAGIIVMVLALMTVELFGMMGLIGIKLSAVPVVILIASVGIGVEFTVHVALAFLTAIGDKNHRAMLALEHMFAPVLDGAVSTLLGVLMLAGSEFDFIVRYFFAVLAILTVLGVLNGLVLLPVLLSFFGPCPEVSPANGLNRLPTPSPEPPPSVVRFAVPPGHTNNGSDSSDSEYSSQTTVSGISEELRQYEAQQGAGGPAHQVIVEATENPVFARSTVVHPDSRHQPPLTPRQQPHLDSGSLSPGRQGQQPRRDPPREGLRPPPYRPRRDAFEISTEGHSGPSNRDRSGPRGARSHNPRNPTSTAMGSSVPSYCQPITTVTASASVTVAVHPPPGPGRNPRGGPCPGYESYPETDHGVFEDPHVPFHVRCERRDSKVEVIELQDVECEERPWGSSSN.

The segment covering 1-13 (MASAGNAAGALGR) has biased composition (low complexity). The segment at 1-34 (MASAGNAAGALGRQAGGGRRRRTGGPHRAAPDRD) is disordered. The Cytoplasmic portion of the chain corresponds to 1–86 (MASAGNAAGA…GCYIQKNCGK (86 aa)). The helical transmembrane segment at 87-107 (FLVVGLLIFGAFAVGLKAANL) threads the bilayer. Residues 108 to 422 (ETNVEELWVE…LDDILKSFSD (315 aa)) are Extracellular-facing. Residues Asn-127, Asn-298, Asn-335, and Asn-400 are each glycosylated (N-linked (GlcNAc...) asparagine). Residues 423 to 443 (VSVIRVASGYLLMLAYACLTM) form a helical membrane-spanning segment. The SSD domain maps to 424 to 584 (SVIRVASGYL…LLIFPAILSM (161 aa)). The Cytoplasmic portion of the chain corresponds to 444-458 (LRWDCSKSQGAVGLA). The helical transmembrane segment at 459–479 (GVLLVALSVAAGLGLCSLIGI) threads the bilayer. The Extracellular portion of the chain corresponds to 480–487 (SFNAATTQ). The helical transmembrane segment at 488–508 (VLPFLALGVGVDDVFLLAHAF) threads the bilayer. Over 509 to 533 (SETGQNKRIPFEDRTGECLKRTGAS) the chain is Cytoplasmic. A helical transmembrane segment spans residues 534–554 (VALTSISNVTAFFMAALIPIP). The Extracellular segment spans residues 555–563 (ALRAFSLQA). A helical transmembrane segment spans residues 564–584 (AVVVVFNFAMVLLIFPAILSM). At 585 to 734 (DLYRREDRRL…HYAPFLLKPK (150 aa)) the chain is on the cytoplasmic side. Residues 735–755 (AKVVVILLFLGLLGVSLYGTT) traverse the membrane as a helical segment. Over 756-1013 (RVRDGLDLTD…WEQYISLRHW (258 aa)) the chain is Extracellular. 2 N-linked (GlcNAc...) asparagine glycosylation sites follow: Asn-861 and Asn-986. A helical membrane pass occupies residues 1014–1034 (LLLSISVVLACTFLVCAVFLL). Residues 1035–1039 (NPWTA) lie on the Cytoplasmic side of the membrane. The chain crosses the membrane as a helical span at residues 1040–1060 (GIIVMVLALMTVELFGMMGLI). Over 1061-1069 (GIKLSAVPV) the chain is Extracellular. Residues 1070 to 1090 (VILIASVGIGVEFTVHVALAF) traverse the membrane as a helical segment. Residues 1091-1107 (LTAIGDKNHRAMLALEH) lie on the Cytoplasmic side of the membrane. Residues 1108–1128 (MFAPVLDGAVSTLLGVLMLAG) traverse the membrane as a helical segment. Residues 1129 to 1140 (SEFDFIVRYFFA) are Extracellular-facing. A helical membrane pass occupies residues 1141–1161 (VLAILTVLGVLNGLVLLPVLL). Residues 1162–1434 (SFFGPCPEVS…EERPWGSSSN (273 aa)) lie on the Cytoplasmic side of the membrane. Disordered regions lie at residues 1175–1219 (GLNR…TVSG), 1257–1348 (HPDS…SSVP), and 1368–1396 (HPPPGPGRNPRGGPCPGYESYPETDHGVF). Thr-1181 carries the post-translational modification Phosphothreonine. Ser-1183 carries the phosphoserine modification. Low complexity predominate over residues 1204–1213 (SDSSDSEYSS). The segment covering 1288–1297 (PRRDPPREGL) has biased composition (basic and acidic residues). Over residues 1335 to 1348 (PRNPTSTAMGSSVP) the composition is skewed to polar residues. Lys-1413 is covalently cross-linked (Glycyl lysine isopeptide (Lys-Gly) (interchain with G-Cter in ubiquitin)).

Belongs to the patched family. As to quaternary structure, interacts with SNX17. Interacts with IHH. Interacts with G-protein coupled receptor GPR37L1. Glycosylation is necessary for SHH binding. Post-translationally, in the absence of Hh ligands, ubiquitination by ITCH at Lys-1413 promotes endocytosis and both proteasomal and lysosomal degradation. As to expression, detected in cerebellar Bergmann glia cells (at protein level). In the developing embryo, first detected within the ventral neural tube and later in the somites and limb buds. Expression in the limb buds is restricted to the posterior ectoderm surrounding the zone of polarizing activity. In the adult, expression is seen in brain, lung, liver, kidney and ocular tissues; lower levels in heart, skeletal muscle, and testis.

The protein localises to the cell membrane. Its function is as follows. Acts as a receptor for sonic hedgehog (SHH), indian hedgehog (IHH) and desert hedgehog (DHH). Associates with the smoothened protein (SMO) to transduce the hedgehog's proteins signal. Seems to have a tumor suppressor function, as inactivation of this protein is probably a necessary, if not sufficient step for tumorigenesis. In Mus musculus (Mouse), this protein is Protein patched homolog 1 (Ptch1).